A 453-amino-acid chain; its full sequence is MQAIAKNDIKTGTVVDLTHEGHGVVKIDRFPIFIPQALINEQIEYKIIKVKKNFAIGKLLNINTRSENRVAPPCIYYERCGGCQLQHLSYEAQLEMKKEQVINLFQRKAHFDNSKINDTVGMTDPWRYRNKSQIPVGKNEQNEVIMGFYRQRSHDIIDMGSCLIQDSQHQEVMNEVKSILKDLNVSIYQEQLKKGLMRHLVVRTGYHTDEMMVIFVTNGKNWPQKNAVVEKILDAFPNVTSIKQNINDSHSNVIMGRQSITLYGKDTIIDQLTDSTFKISDQSFYQINSEQTEKLYNKAIEYAQLTGNEVVLDTYCGIGTIGLYMAPHAKHVYGVEVVPSAIEDAQQNATINQCNNTTFVCGKAEEVILQWKAQGIKPDVVMVDPPRKGCDETFIQTLLTLEPKRIVYISCNPSTQQRDALLLAEKYQLEEVTPVDMFPQTTHVETVALFNLK.

Cys-74, Cys-80, Cys-83, and Cys-162 together coordinate [4Fe-4S] cluster. S-adenosyl-L-methionine is bound by residues Gln-286, Tyr-315, Glu-336, and Asp-384. Catalysis depends on Cys-411, which acts as the Nucleophile.

The protein belongs to the class I-like SAM-binding methyltransferase superfamily. RNA M5U methyltransferase family.

This is an uncharacterized protein from Staphylococcus aureus (strain MRSA252).